The sequence spans 217 residues: Ribose-5-phosphate isomerase A (217 aa).

Residues 28–31 (TGST), 81–84 (DGAD), and 94–97 (KGGG) contribute to the substrate site. Residue glutamate 103 is the Proton acceptor of the active site. Position 121 (lysine 121) interacts with substrate.

It belongs to the ribose 5-phosphate isomerase family. In terms of assembly, homodimer.

It catalyses the reaction aldehydo-D-ribose 5-phosphate = D-ribulose 5-phosphate. Its pathway is carbohydrate degradation; pentose phosphate pathway; D-ribose 5-phosphate from D-ribulose 5-phosphate (non-oxidative stage): step 1/1. Its function is as follows. Catalyzes the reversible conversion of ribose-5-phosphate to ribulose 5-phosphate. This is Ribose-5-phosphate isomerase A from Aeromonas salmonicida (strain A449).